A 359-amino-acid polypeptide reads, in one-letter code: DNA polymerase IV (359 aa).

One can recognise a UmuC domain in the interval 4 to 184; it reads IVHVDMDAFY…LPVNRIPGVG (181 aa). 2 residues coordinate Mg(2+): D8 and D102. E103 is a catalytic residue.

Belongs to the DNA polymerase type-Y family. In terms of assembly, monomer. Requires Mg(2+) as cofactor.

It localises to the cytoplasm. The catalysed reaction is DNA(n) + a 2'-deoxyribonucleoside 5'-triphosphate = DNA(n+1) + diphosphate. Poorly processive, error-prone DNA polymerase involved in untargeted mutagenesis. Copies undamaged DNA at stalled replication forks, which arise in vivo from mismatched or misaligned primer ends. These misaligned primers can be extended by PolIV. Exhibits no 3'-5' exonuclease (proofreading) activity. May be involved in translesional synthesis, in conjunction with the beta clamp from PolIII. This Xanthomonas campestris pv. campestris (strain 8004) protein is DNA polymerase IV.